A 67-amino-acid polypeptide reads, in one-letter code: Large ribosomal subunit protein bL32 (67 aa).

Basic residues predominate over residues 1–19 (MAVPKRKMSRANTRARRAQ). The disordered stretch occupies residues 1 to 20 (MAVPKRKMSRANTRARRAQW).

It belongs to the bacterial ribosomal protein bL32 family.

In Paenarthrobacter aurescens (strain TC1), this protein is Large ribosomal subunit protein bL32.